Here is a 275-residue protein sequence, read N- to C-terminus: Large ribosomal subunit protein uL2 (275 aa).

The segment at 223–275 is disordered; sequence GVVMNPVDHPHGGGEGRGKGHHPQSPWGVPAKGYKTRRGKRASDKFIVRRRNG. A compositionally biased stretch (basic and acidic residues) spans 230 to 240; it reads DHPHGGGEGRG.

This sequence belongs to the universal ribosomal protein uL2 family. As to quaternary structure, part of the 50S ribosomal subunit. Forms a bridge to the 30S subunit in the 70S ribosome.

One of the primary rRNA binding proteins. Required for association of the 30S and 50S subunits to form the 70S ribosome, for tRNA binding and peptide bond formation. It has been suggested to have peptidyltransferase activity; this is somewhat controversial. Makes several contacts with the 16S rRNA in the 70S ribosome. The polypeptide is Large ribosomal subunit protein uL2 (Fervidobacterium nodosum (strain ATCC 35602 / DSM 5306 / Rt17-B1)).